The sequence spans 228 residues: Rab-like protein 2B (228 aa).

Residues 28–35, 76–80, and 133–136 contribute to the GTP site; these read GDSAVGKS, DTAGQ, and NKID. The disordered stretch occupies residues 200-228; it reads LEQEEEDVPDQEQSSSIETPSEEAASPHS.

It belongs to the small GTPase superfamily. Rab family. Interacts (in its GTP-bound form) with CEP19 (via residues 121-150); this interaction is required for its localization to the mother centriole and cilium basal body. Interacts (in its GTP-bound form) with the intraflagellar transport (IFT) complex B (via the IFT74-IFT81 heterodimer). Binding to CEP19 and the IFT74-IFT81 heterodimer is mutually exclusive. In terms of tissue distribution, expressed in the testis.

It localises to the cytoplasm. Its subcellular location is the cytoskeleton. The protein resides in the microtubule organizing center. The protein localises to the centrosome. It is found in the centriole. It localises to the cilium basal body. Functionally, small GTPase required for ciliation. Activated in a guanine nucleotide exchange factor (GEF)-independent manner via its intrinsic GDP for GTP nucleotide exchange ability. Involved in ciliary assembly by binding the intraflagellar transport (IFT) complex B from the large pool pre-docked at the base of the cilium and thus triggers its entry into the cilia. The protein is Rab-like protein 2B (RABL2B) of Homo sapiens (Human).